A 107-amino-acid polypeptide reads, in one-letter code: Nucleoid-associated protein A1E_05550 (107 aa).

Belongs to the YbaB/EbfC family. As to quaternary structure, homodimer.

It is found in the cytoplasm. It localises to the nucleoid. Functionally, binds to DNA and alters its conformation. May be involved in regulation of gene expression, nucleoid organization and DNA protection. This Rickettsia canadensis (strain McKiel) protein is Nucleoid-associated protein A1E_05550.